Reading from the N-terminus, the 354-residue chain is Major egg antigen (354 aa).

Positions 1–21 (MSGGKQHNAVSIPVNREQRSF) are disordered. 2 consecutive sHSP domains span residues 122–233 (SVND…VAVR) and 251–354 (AKGV…AITH).

It belongs to the small heat shock protein (HSP20) family.

This Schistosoma mansoni (Blood fluke) protein is Major egg antigen.